Here is a 385-residue protein sequence, read N- to C-terminus: Tryptophan--tRNA ligase (385 aa).

Residues 82 to 90 carry the 'HIGH' region motif; sequence PSGPMHIGH. A 'KMSKS' region motif is present at residues 253–257; sequence KMSAS.

It belongs to the class-I aminoacyl-tRNA synthetase family.

Its subcellular location is the cytoplasm. It carries out the reaction tRNA(Trp) + L-tryptophan + ATP = L-tryptophyl-tRNA(Trp) + AMP + diphosphate + H(+). This is Tryptophan--tRNA ligase from Pyrococcus furiosus (strain ATCC 43587 / DSM 3638 / JCM 8422 / Vc1).